The chain runs to 322 residues: tRNA dimethylallyltransferase (322 aa).

An ATP-binding site is contributed by 18–25; that stretch reads GPTASGKS. Residue 20–25 coordinates substrate; it reads TASGKS. Interaction with substrate tRNA stretches follow at residues 43–46 and 167–171; these read DSRQ and QRLVR.

Belongs to the IPP transferase family. As to quaternary structure, monomer. The cofactor is Mg(2+).

The enzyme catalyses adenosine(37) in tRNA + dimethylallyl diphosphate = N(6)-dimethylallyladenosine(37) in tRNA + diphosphate. Functionally, catalyzes the transfer of a dimethylallyl group onto the adenine at position 37 in tRNAs that read codons beginning with uridine, leading to the formation of N6-(dimethylallyl)adenosine (i(6)A). The polypeptide is tRNA dimethylallyltransferase (Chlorobium phaeobacteroides (strain BS1)).